A 510-amino-acid polypeptide reads, in one-letter code: Archaeosine synthase subunit alpha (510 aa).

One can recognise a PUA domain in the interval 427–510 (LGKFTINKAS…LKKGIAVKVR (84 aa)).

Belongs to the archaeosine synthase type 1 family. As to quaternary structure, forms a robust complex with the archaeosine synthase beta subunit RaSEA, likely an alpha(2)beta(2) heterotetrameric structure. Formation of this complex highly increases lysine transfer activity.

The catalysed reaction is 7-cyano-7-carbaguanosine(15) in tRNA + L-lysine = 7-N-[(5S)-5-amino-5-carboxypentyl]formamidino-7-deazaguanosine(15) in tRNA. Its pathway is tRNA modification; archaeosine-tRNA biosynthesis. Functionally, functions in the biosynthesis of archaeosine, a modified nucleoside present in the dihydrouridine loop (D-loop) of archaeal tRNAs. Catalyzes the addition of L-lysine to the cyano group of 7-cyano-7-deazaguanine (preQ0)-modified tRNAs at position 15, to generate q0kN15-tRNA, a q0N lysine adduct identified as 7-N-[(5S)-5-amino-5-carboxypentyl]formamidino-7-deazaguanosine. The chain is Archaeosine synthase subunit alpha from Thermoplasma acidophilum (strain ATCC 25905 / DSM 1728 / JCM 9062 / NBRC 15155 / AMRC-C165).